The chain runs to 434 residues: Bestrophin homolog 12 (434 aa).

A run of 4 helical transmembrane segments spans residues 31 to 51 (KVIL…FLVF), 76 to 96 (VCIP…DQWE), 244 to 264 (IPIP…YFFF), and 278 to 298 (WALS…FLVG).

The protein belongs to the anion channel-forming bestrophin (TC 1.A.46) family. Calcium-sensitive chloride channel subfamily. Forms oligomers.

The protein localises to the cell membrane. Its function is as follows. Forms chloride channels. This chain is Bestrophin homolog 12 (best-12), found in Caenorhabditis elegans.